A 191-amino-acid chain; its full sequence is Holliday junction branch migration complex subunit RuvA (191 aa).

The domain I stretch occupies residues 1 to 64 (MIGRLTGTLA…EDAQLLYGFL (64 aa)). Residues 65 to 138 (TATERATFRQ…KGKLGPDLAL (74 aa)) are domain II. The flexible linker stretch occupies residues 138 to 142 (LPGAV). Residues 143–191 (IRNEAQSDIVQALIALGYNEREAAAAIKPLPADVGVSDGIKLALRALGK) are domain III.

The protein belongs to the RuvA family. In terms of assembly, homotetramer. Forms an RuvA(8)-RuvB(12)-Holliday junction (HJ) complex. HJ DNA is sandwiched between 2 RuvA tetramers; dsDNA enters through RuvA and exits via RuvB. An RuvB hexamer assembles on each DNA strand where it exits the tetramer. Each RuvB hexamer is contacted by two RuvA subunits (via domain III) on 2 adjacent RuvB subunits; this complex drives branch migration. In the full resolvosome a probable DNA-RuvA(4)-RuvB(12)-RuvC(2) complex forms which resolves the HJ.

Its subcellular location is the cytoplasm. Its function is as follows. The RuvA-RuvB-RuvC complex processes Holliday junction (HJ) DNA during genetic recombination and DNA repair, while the RuvA-RuvB complex plays an important role in the rescue of blocked DNA replication forks via replication fork reversal (RFR). RuvA specifically binds to HJ cruciform DNA, conferring on it an open structure. The RuvB hexamer acts as an ATP-dependent pump, pulling dsDNA into and through the RuvAB complex. HJ branch migration allows RuvC to scan DNA until it finds its consensus sequence, where it cleaves and resolves the cruciform DNA. The polypeptide is Holliday junction branch migration complex subunit RuvA (Leptothrix cholodnii (strain ATCC 51168 / LMG 8142 / SP-6) (Leptothrix discophora (strain SP-6))).